Here is a 97-residue protein sequence, read N- to C-terminus: Stefin-1 (97 aa).

A Secondary area of contact motif is present at residues 46 to 50 (QVVAG).

The protein belongs to the cystatin family.

It localises to the cytoplasm. This is an intracellular thiol proteinase inhibitor. The polypeptide is Stefin-1 (Stfa1) (Mus musculus (Mouse)).